The following is a 772-amino-acid chain: Subtilisin-like protease SBT5.3 (772 aa).

Residues 1-25 form the signal peptide; the sequence is MKLTHNFSFLLLLLLVHMSSKHILA. The Inhibitor I9 domain maps to 31–116; that stretch reads SYVVYFGAHS…VFPNKALKLH (86 aa). One can recognise a Peptidase S8 domain in the interval 120 to 628; sequence SWDFLGLEHN…AGHVQPNLAV (509 aa). D153 functions as the Charge relay system in the catalytic mechanism. N211 carries N-linked (GlcNAc...) asparagine glycosylation. The Charge relay system role is filled by H223. N-linked (GlcNAc...) asparagine glycosylation is found at N246, N306, and N396. One can recognise a PA domain in the interval 398 to 480; it reads SALDAQLCKL…KDSFAVSRYI (83 aa). Residue S561 is the Charge relay system of the active site. Residues N606, N651, N662, N684, and N725 are each glycosylated (N-linked (GlcNAc...) asparagine).

The protein belongs to the peptidase S8 family. As to expression, expressed specifically at sites of lateral root emergence.

Its subcellular location is the secreted. It localises to the cell wall. Its function is as follows. Serine protease. Has a substrate preference for the hydrophobic residues Phe and Ala and the basic residue Asp in the P1 position, and for Asp, Leu or Ala in the P1' position. May play a role in the degradation of structural proteins in the extracellular matrix of cells located above sites of lateral root formation and thus facilitate lateral root emergence. The protein is Subtilisin-like protease SBT5.3 (AIR3) of Arabidopsis thaliana (Mouse-ear cress).